The primary structure comprises 783 residues: Cilia- and flagella-associated protein 91 (783 aa).

The segment covering 748–760 has biased composition (acidic residues); the sequence is EDFELEEEAESLD. The interval 748–783 is disordered; it reads EDFELEEEAESLDSEVPTVSVSKTSTIKPTQDEGEG. Residues 764–776 are compositionally biased toward polar residues; sequence PTVSVSKTSTIKP.

The protein belongs to the CFAP91 family. Part of a complex containing MYCBP, AKAP1 and PRKAR2B. Interacts with MYCBP and AKAP1. Interacts with CFAP61. Post-translationally, phosphorylated by PKA. In terms of tissue distribution, expressed in the testis, in cells involved in spermatogenesis.

Its subcellular location is the cytoplasm. The protein resides in the mitochondrion. The protein localises to the cytoskeleton. It localises to the cilium axoneme. Functionally, involved in sperm flagellum axonemal organization and function. May regulate cilium motility through its role in the assembly of the axonemal radial spokes. In Mus musculus (Mouse), this protein is Cilia- and flagella-associated protein 91.